The sequence spans 873 residues: Coatomer subunit gamma-2 (873 aa).

Over residues methionine 1–glutamate 11 the composition is skewed to basic and acidic residues. The tract at residues methionine 1–histidine 21 is disordered. HEAT repeat units follow at residues threonine 64–aspartate 101, arginine 283–serine 320, alanine 321–serine 355, serine 356–arginine 392, serine 395–glutamate 430, and proline 467–aspartate 504.

Belongs to the COPG family. Oligomeric complex.

It localises to the cytoplasm. Its subcellular location is the golgi apparatus membrane. The protein resides in the cytoplasmic vesicle. It is found in the COPI-coated vesicle membrane. Functionally, the coatomer is a cytosolic protein complex that binds to dilysine motifs and reversibly associates with Golgi non-clathrin-coated vesicles, which further mediate biosynthetic protein transport from the ER, via the Golgi up to the trans Golgi network. Coatomer complex is required for budding from Golgi membranes, and is essential for the retrograde Golgi-to-ER transport of dilysine-tagged proteins. The chain is Coatomer subunit gamma-2 (copg2) from Danio rerio (Zebrafish).